The following is a 586-amino-acid chain: Clathrin heavy chain linker domain-containing protein 1 (586 aa).

Positions 174-232 (MNLDALTKYMKHLEDKYAEIKQAMLIKYVPAQRKADLDEEMIVLLKRRDVAENLNKKLQ) form a coiled coil.

This is Clathrin heavy chain linker domain-containing protein 1 (CLHC1) from Homo sapiens (Human).